Consider the following 105-residue polypeptide: Multidrug resistance protein EbrA (105 aa).

4 helical membrane-spanning segments follow: residues 2–22 (LVGY…AAML), 35–55 (ALVV…LNHI), 57–77 (LSLS…VIGV), and 84–104 (LNAK…LLNW).

This sequence belongs to the drug/metabolite transporter (DMT) superfamily. Small multidrug resistance (SMR) (TC 2.A.7.1) family. EbrA/EbrB subfamily. In terms of assembly, the efflux pump is composed of EbrA and EbrB.

The protein localises to the cell membrane. Its function is as follows. Part of a multidrug efflux pump. Confers resistance to cationic lipophilic dyes such as ethidium bromide, acriflavine, pyronine Y and safranin O. The efflux is probably coupled to an influx of protons. The polypeptide is Multidrug resistance protein EbrA (ebrA) (Bacillus atrophaeus).